The following is a 474-amino-acid chain: Immunoglobulin heavy constant mu (474 aa).

The interval 1–105 (GSASAPTLFP…NKEKNVPLPV (105 aa)) is CH1. At 1–450 (GSASAPTLFP…EEGFENLWAT (450 aa)) the chain is on the extracellular side. Ig-like domains are found at residues 6–102 (PTLF…KNVP), 111–211 (PKVS…QNAS), 229–319 (PSFA…QTIS), and 329–430 (PDVY…RTVD). Cystine bridges form between C28/C88 and C134/C197. N-linked (GlcNAc...) (complex) asparagine glycosylation is present at N46. The CH2 stretch occupies residues 106–217 (IAELPPKVSV…QNASSMCVPD (112 aa)). Residue N209 is glycosylated (N-linked (GlcNAc...) (complex) asparagine). The tract at residues 218 to 323 (QDTAIRVFAI…LKQTISRPKG (106 aa)) is CH3. 2 disulfide bridges follow: C244-C303 and C351-C413. N-linked (GlcNAc...) asparagine glycosylation is found at N272 and N279. The segment at 324–452 (VALHRPDVYL…GFENLWATAS (129 aa)) is CH4. An important for IgM oligomerization region spans residues 437–453 (VSADEEGFENLWATAST). The N-linked (GlcNAc...) asparagine glycan is linked to D440. Residues 451–471 (ASTFIVLFLLSLFYSTTVTLF) traverse the membrane as a helical segment. Over 472-474 (KVK) the chain is Cytoplasmic.

As to quaternary structure, the basic structural unit of both sIgM and mIgM molecules consists of two identical heavy chains and two identical light chains; disulfide-linked. N-terminal variable regions of the heavy and light chains form the antigen binding sites, whereas the C-terminal constant regions of the heavy chains interact with immune receptors to mediate effector functions. Part of IgM antibody. Forms high order oligomers, homopentamers stabilized by the JCHAIN and homohexamers that lack JCHAIN. The oligomerization amplifies an inherently low affinity of IgM antibodies for the antigen by multi-point attachment (avidity). Adjacent IgM protomers associate via interchain disulfide links to form an asymmetric pentameric structure with a 50 degree gap. A single copy of JCHAIN is covalently linked to the first and the fifth IgM monomers via interchain disulfide bonds thus closing the pentamer ring. Only JCHAIN-containing IgM binds PIGR secretory component (via D1-CDR1 region); this interaction is a prerequisite for IgM transcytosis across mucosal epithelium. Pentameric sIgM interacts (via CH4 domain) with FCRM (via Ig-like domain); the interaction is glycan-independent and multivalent theoretically involving up to eight binding sites for the IgM pentamer. Interacts with FCAMR; this interaction facilitates the endocytosis of IgM-coated microbes or IgM-antigen immune complexes. Antigen-bound IgM (via the Fc region) binds to globular domains of C1q component of the complement system, all three modules C1QA, C1QB and C1QC being involved in IgM binding; this interaction is multivalent. Pentameric sIgM (via Fc region) interacts with CD5L (via SRCR2) through interchain disulfide-linkages; this interaction protects CD5L from renal excretion and provides for high levels of CD5L in circulation. In terms of assembly, part of IgM B cell receptor complex on pre-B cells, immature and mature B cells. The BCR complex consists of one membrane-bound IgM molecule responsible for antigen binding, non-covalently associated with CD79A and CD79B signaling chains. Post-translationally, N-glycosylated; important for IgM secretion and its localization at the plasma membrane. The interaction with FCMR is glycan-independent.

Its subcellular location is the secreted. The protein localises to the cell membrane. In terms of biological role, constant region of immunoglobulin heavy chains. Immunoglobulins, also known as antibodies, are membrane-bound or secreted glycoproteins produced by B lymphocytes. In the recognition phase of humoral immunity, the membrane-bound immunoglobulins serve as receptors which, upon binding of a specific antigen, trigger the clonal expansion and differentiation of B lymphocytes into immunoglobulins-secreting plasma cells. Secreted immunoglobulins mediate the effector phase of humoral immunity, which results in the elimination of bound antigens. The antigen binding site is formed by the variable domain of one heavy chain, together with that of its associated light chain. Thus, each immunoglobulin has two antigen binding sites with remarkable affinity for a particular antigen. The variable domains are assembled by a process called V-(D)-J rearrangement and can then be subjected to somatic hypermutations which, after exposure to antigen and selection, allow affinity maturation for a particular antigen. Constant region of secreted IgM (sIgM), also known as the Fc region of IgM antibody. Able to multimerize, forms high order polymers, mainly pentamers and occasionally hexamers, providing for multivalency and high avidity recognition of antigens. Natural sIgM are polyreactive and recognize conserved self- and pathogen-derived structures, whereas immune sIgM are secreted only upon exposure to pathogens and are antigen-specific. Both natural and immune sIgM are required for an efficient humoral immune response to infection. Mediates sIgM effector functions mostly via Fc receptors and the complement system. On lymphoid cells binds high-affinity Fc receptor FCMR and promotes induction of an efficient neutralizing IgG response while maintaining tolerance to self-antigens. Recruits C1q complement component to initiate the classical complement pathway, facilitating the recognition and neutralization of pathogens by the host. Together with C1q and mannose-binding lectin promotes the phagocytosis of apoptotic cells by macrophages, ensuring the clearance of potential autoimmune epitopes from tissues. Involved in mucosal immunity. It is transported by transcytosis across mucosal epithelium by PIGR and secreted on the apical side in complex with PIGR secretory component to scan mucosal lining for pathogens. IgM-antigen complexes undergo FCMR-mediated retrotranscytosis across mucosal M cells toward antigen-presenting cells in mucosal lymphoid tissues. Its function is as follows. Constant region of membrane-bound IgM, part of the B cell receptor complex (BCR). IgM BCR provides constitutive tonic signaling for B cell survival. Mediates pre-BCR signaling that regulates B cell selection and rearrangement of Ig genes via allelic exclusion. The polypeptide is Immunoglobulin heavy constant mu (Homo sapiens (Human)).